A 504-amino-acid chain; its full sequence is Cobyric acid synthase (504 aa).

The region spanning 254 to 442 (AIDVAVIRYP…MHDLFHNDMF (189 aa)) is the GATase cobBQ-type domain. Cys336 (nucleophile) is an active-site residue. The active site involves His434.

This sequence belongs to the CobB/CobQ family. CobQ subfamily.

It participates in cofactor biosynthesis; adenosylcobalamin biosynthesis. In terms of biological role, catalyzes amidations at positions B, D, E, and G on adenosylcobyrinic A,C-diamide. NH(2) groups are provided by glutamine, and one molecule of ATP is hydrogenolyzed for each amidation. This is Cobyric acid synthase from Anoxybacillus flavithermus (strain DSM 21510 / WK1).